A 579-amino-acid chain; its full sequence is Putative truncated flagellar export/assembly protein LfhA (579 aa).

3 helical membrane-spanning segments follow: residues 86–106 (AIAG…IGIF), 124–144 (IGDG…AAII), and 177–197 (FVLA…SALL).

Belongs to the FHIPEP (flagella/HR/invasion proteins export pore) family.

The protein resides in the cell inner membrane. The protein is Putative truncated flagellar export/assembly protein LfhA of Escherichia coli (strain K12).